The sequence spans 432 residues: Adenosylhomocysteinase (432 aa).

S2 carries the N-acetylserine modification. Positions 57, 131, and 156 each coordinate substrate. 157-159 (TTT) lines the NAD(+) pocket. S183 carries the phosphoserine modification. Positions 186 and 190 each coordinate substrate. K186 bears the N6-(2-hydroxyisobutyryl)lysine mark. Y193 is modified (phosphotyrosine). Residues 222–227 (GDVGKG), E243, N248, 299–301 (IGH), N346, and H353 each bind NAD(+).

This sequence belongs to the adenosylhomocysteinase family. In terms of assembly, homotetramer. Interaction with AHCYL1. Requires NAD(+) as cofactor.

Its subcellular location is the cytoplasm. It localises to the melanosome. It is found in the nucleus. The protein localises to the endoplasmic reticulum. It catalyses the reaction S-adenosyl-L-homocysteine + H2O = L-homocysteine + adenosine. Its pathway is amino-acid biosynthesis; L-homocysteine biosynthesis; L-homocysteine from S-adenosyl-L-homocysteine: step 1/1. Its function is as follows. Catalyzes the hydrolysis of S-adenosyl-L-homocysteine to form adenosine and homocysteine. Binds copper ions. In Homo sapiens (Human), this protein is Adenosylhomocysteinase (AHCY).